The primary structure comprises 430 residues: Methylthioribose kinase 1 (430 aa).

ATP-binding positions include 52-56, K71, and 125-127; these read DGNLN and RYI. Residue N56 coordinates substrate. Residue D246 participates in substrate binding. 263 to 265 is a binding site for ATP; it reads DPE. R373 serves as a coordination point for substrate.

Belongs to the methylthioribose kinase family. In terms of assembly, homodimer.

The catalysed reaction is 5-(methylsulfanyl)-D-ribose + ATP = 5-(methylsulfanyl)-alpha-D-ribose 1-phosphate + ADP + H(+). The protein operates within amino-acid biosynthesis; L-methionine biosynthesis via salvage pathway; S-methyl-5-thio-alpha-D-ribose 1-phosphate from S-methyl-5'-thioadenosine (hydrolase route): step 2/2. Its function is as follows. Catalyzes the phosphorylation of methylthioribose into methylthioribose-1-phosphate. The sequence is that of Methylthioribose kinase 1 from Oryza sativa subsp. japonica (Rice).